Here is a 133-residue protein sequence, read N- to C-terminus: Cytochrome b5 (133 aa).

In terms of domain architecture, Cytochrome b5 heme-binding spans 4–86; it reads EKEYILDEIS…LKNYLVGNFK (83 aa). The heme site is built by H45 and H69. Residues 108 to 128 form a helical membrane-spanning segment; sequence SGTGIMLIVLMALFAIAYGYY.

Belongs to the cytochrome b5 family. Interacts with alternative squalene epoxidase PHATRDRAFT_45494.

The protein localises to the endoplasmic reticulum membrane. Hemoprotein that functions as an electron carrier for membrane bound monooxygenases involved in sterol biosynthesis. The protein is Cytochrome b5 of Phaeodactylum tricornutum (strain CCAP 1055/1).